The sequence spans 156 residues: Ribosomal RNA large subunit methyltransferase H (156 aa).

S-adenosyl-L-methionine contacts are provided by residues Leu73, Gly104, and 123–128; that span reads VSSLTL.

Belongs to the RNA methyltransferase RlmH family. Homodimer.

It localises to the cytoplasm. The enzyme catalyses pseudouridine(1915) in 23S rRNA + S-adenosyl-L-methionine = N(3)-methylpseudouridine(1915) in 23S rRNA + S-adenosyl-L-homocysteine + H(+). Functionally, specifically methylates the pseudouridine at position 1915 (m3Psi1915) in 23S rRNA. This Burkholderia thailandensis (strain ATCC 700388 / DSM 13276 / CCUG 48851 / CIP 106301 / E264) protein is Ribosomal RNA large subunit methyltransferase H.